The sequence spans 270 residues: Tetraspanin-14 (270 aa).

The Cytoplasmic segment spans residues 1 to 17 (MHYYRYSNAEVSCWYKY). A helical transmembrane segment spans residues 18-38 (LLFSYNIVFWLAGVVFLGVGL). Over 39–61 (WAWSEKGVLSDLTKVTRLHGIDP) the chain is Extracellular. Residues 62–82 (VVLVLMVGVVMFTLGFAGCVG) traverse the membrane as a helical segment. The Cytoplasmic portion of the chain corresponds to 83–92 (ALRENICLLK). Residues 93–113 (FFCGAIVLIFFLELAVAVLAF) traverse the membrane as a helical segment. The Extracellular portion of the chain corresponds to 114–232 (LFQDWVRDRF…QALEGWLPRN (119 aa)). Positions 114 to 232 (LFQDWVRDRF…QALEGWLPRN (119 aa)) are necessary and sufficient for interaction with ADAM10. 4 disulfides stabilise this stretch: Cys-153–Cys-221, Cys-154–Cys-186, Cys-170–Cys-180, and Cys-187–Cys-200. Asn-169 carries N-linked (GlcNAc...) asparagine glycosylation. A helical membrane pass occupies residues 233-253 (IYIVAGVFIAISLLQIFGIFL). Over 254–270 (ARTLISDIEAVKAGHHF) the chain is Cytoplasmic.

It belongs to the tetraspanin (TM4SF) family. As to quaternary structure, interacts with ADAM10; the interaction promotes ADAM10 maturation and cell surface expression.

Its subcellular location is the cell membrane. Functionally, part of TspanC8 subgroup, composed of 6 members that interact with the transmembrane metalloprotease ADAM10. This interaction is required for ADAM10 exit from the endoplasmic reticulum and for enzymatic maturation and trafficking to the cell surface as well as substrate specificity. Different TspanC8/ADAM10 complexes have distinct substrates. Negatively regulates ADAM10-mediated cleavage of GP6. Promotes ADAM10-mediated cleavage of CDH5. This chain is Tetraspanin-14 (Tspan14), found in Mus musculus (Mouse).